The following is a 345-amino-acid chain: AP2-like ethylene-responsive transcription factor At1g16060 (345 aa).

Residues Thr15–Val62 form a disordered region. DNA-binding regions (AP2/ERF) lie at residues Val58–Pro124 and Lys160–Asp218. The disordered stretch occupies residues His243–Phe302.

Belongs to the AP2/ERF transcription factor family. AP2 subfamily.

The protein localises to the nucleus. In terms of biological role, probably acts as a transcriptional activator. Binds to the GCC-box pathogenesis-related promoter element. May be involved in the regulation of gene expression by stress factors and by components of stress signal transduction pathways. The chain is AP2-like ethylene-responsive transcription factor At1g16060 from Arabidopsis thaliana (Mouse-ear cress).